The primary structure comprises 399 residues: Flavohemoprotein (399 aa).

Residues 1 to 138 (MLDNKTIEII…IADAFIGIEK (138 aa)) form the Globin domain. His-85 serves as a coordination point for heme b. Active-site charge relay system residues include Tyr-95 and Glu-137. Residues 149–399 (GGWKEYKPFV…GPQLSLAQSV (251 aa)) form a reductase region. In terms of domain architecture, FAD-binding FR-type spans 152–255 (KEYKPFVIAK…SAPAGDFVLD (104 aa)). FAD-binding positions include Tyr-190 and 206-209 (RQYS). Residue 268–273 (GVGITP) coordinates NADP(+). An FAD-binding site is contributed by 388-391 (LFGP).

Belongs to the globin family. Two-domain flavohemoproteins subfamily. The protein in the C-terminal section; belongs to the flavoprotein pyridine nucleotide cytochrome reductase family. It depends on heme b as a cofactor. FAD is required as a cofactor.

The enzyme catalyses 2 nitric oxide + NADPH + 2 O2 = 2 nitrate + NADP(+) + H(+). It carries out the reaction 2 nitric oxide + NADH + 2 O2 = 2 nitrate + NAD(+) + H(+). Its function is as follows. Is involved in NO detoxification in an aerobic process, termed nitric oxide dioxygenase (NOD) reaction that utilizes O(2) and NAD(P)H to convert NO to nitrate, which protects the bacterium from various noxious nitrogen compounds. Therefore, plays a central role in the inducible response to nitrosative stress. This is Flavohemoprotein (hmp) from Bacillus subtilis (strain 168).